Reading from the N-terminus, the 255-residue chain is Hydroxyacylglutathione hydrolase (255 aa).

Positions 55, 57, 59, 60, 111, 131, and 169 each coordinate Zn(2+).

The protein belongs to the metallo-beta-lactamase superfamily. Glyoxalase II family. Monomer. It depends on Zn(2+) as a cofactor.

It catalyses the reaction an S-(2-hydroxyacyl)glutathione + H2O = a 2-hydroxy carboxylate + glutathione + H(+). The protein operates within secondary metabolite metabolism; methylglyoxal degradation; (R)-lactate from methylglyoxal: step 2/2. In terms of biological role, thiolesterase that catalyzes the hydrolysis of S-D-lactoyl-glutathione to form glutathione and D-lactic acid. In Chromohalobacter salexigens (strain ATCC BAA-138 / DSM 3043 / CIP 106854 / NCIMB 13768 / 1H11), this protein is Hydroxyacylglutathione hydrolase.